We begin with the raw amino-acid sequence, 340 residues long: 4-hydroxy-3-methylbut-2-enyl diphosphate reductase (340 aa).

Residue Cys-18 participates in [4Fe-4S] cluster binding. His-47 and His-83 together coordinate (2E)-4-hydroxy-3-methylbut-2-enyl diphosphate. Dimethylallyl diphosphate is bound by residues His-47 and His-83. His-47 and His-83 together coordinate isopentenyl diphosphate. Cys-105 lines the [4Fe-4S] cluster pocket. His-133 provides a ligand contact to (2E)-4-hydroxy-3-methylbut-2-enyl diphosphate. Dimethylallyl diphosphate is bound at residue His-133. An isopentenyl diphosphate-binding site is contributed by His-133. Glu-135 serves as the catalytic Proton donor. Thr-174 serves as a coordination point for (2E)-4-hydroxy-3-methylbut-2-enyl diphosphate. Cys-204 serves as a coordination point for [4Fe-4S] cluster. (2E)-4-hydroxy-3-methylbut-2-enyl diphosphate contacts are provided by Ser-232, Ser-233, Asn-234, and Ser-277. Dimethylallyl diphosphate-binding residues include Ser-232, Ser-233, Asn-234, and Ser-277. Isopentenyl diphosphate contacts are provided by Ser-232, Ser-233, Asn-234, and Ser-277.

It belongs to the IspH family. The cofactor is [4Fe-4S] cluster.

The enzyme catalyses isopentenyl diphosphate + 2 oxidized [2Fe-2S]-[ferredoxin] + H2O = (2E)-4-hydroxy-3-methylbut-2-enyl diphosphate + 2 reduced [2Fe-2S]-[ferredoxin] + 2 H(+). It carries out the reaction dimethylallyl diphosphate + 2 oxidized [2Fe-2S]-[ferredoxin] + H2O = (2E)-4-hydroxy-3-methylbut-2-enyl diphosphate + 2 reduced [2Fe-2S]-[ferredoxin] + 2 H(+). It participates in isoprenoid biosynthesis; dimethylallyl diphosphate biosynthesis; dimethylallyl diphosphate from (2E)-4-hydroxy-3-methylbutenyl diphosphate: step 1/1. The protein operates within isoprenoid biosynthesis; isopentenyl diphosphate biosynthesis via DXP pathway; isopentenyl diphosphate from 1-deoxy-D-xylulose 5-phosphate: step 6/6. In terms of biological role, catalyzes the conversion of 1-hydroxy-2-methyl-2-(E)-butenyl 4-diphosphate (HMBPP) into a mixture of isopentenyl diphosphate (IPP) and dimethylallyl diphosphate (DMAPP). Acts in the terminal step of the DOXP/MEP pathway for isoprenoid precursor biosynthesis. This chain is 4-hydroxy-3-methylbut-2-enyl diphosphate reductase, found in Bartonella quintana (strain Toulouse) (Rochalimaea quintana).